Consider the following 344-residue polypeptide: Fructose-1,6-bisphosphatase class 1 (344 aa).

Positions 91, 110, 112, and 113 each coordinate Mg(2+). Substrate is bound by residues 113-116 (DGSS) and asparagine 200. Glutamate 272 serves as a coordination point for Mg(2+).

This sequence belongs to the FBPase class 1 family. Homotetramer. Mg(2+) serves as cofactor.

It localises to the cytoplasm. It catalyses the reaction beta-D-fructose 1,6-bisphosphate + H2O = beta-D-fructose 6-phosphate + phosphate. The protein operates within carbohydrate biosynthesis; Calvin cycle. This Rhodopseudomonas palustris (strain BisA53) protein is Fructose-1,6-bisphosphatase class 1.